Here is a 196-residue protein sequence, read N- to C-terminus: dITP/XTP pyrophosphatase (196 aa).

A substrate-binding site is contributed by 7 to 12 (THNPGK). Mg(2+) contacts are provided by Asp40 and Asp69. The active-site Proton acceptor is Asp69. Residues Ser70, 150–153 (FGYD), Lys173, and 178–179 (HR) contribute to the substrate site.

The protein belongs to the HAM1 NTPase family. Homodimer. Mg(2+) is required as a cofactor.

The catalysed reaction is XTP + H2O = XMP + diphosphate + H(+). It catalyses the reaction dITP + H2O = dIMP + diphosphate + H(+). It carries out the reaction ITP + H2O = IMP + diphosphate + H(+). Functionally, pyrophosphatase that catalyzes the hydrolysis of nucleoside triphosphates to their monophosphate derivatives, with a high preference for the non-canonical purine nucleotides XTP (xanthosine triphosphate), dITP (deoxyinosine triphosphate) and ITP. Seems to function as a house-cleaning enzyme that removes non-canonical purine nucleotides from the nucleotide pool, thus preventing their incorporation into DNA/RNA and avoiding chromosomal lesions. The sequence is that of dITP/XTP pyrophosphatase from Exiguobacterium sp. (strain ATCC BAA-1283 / AT1b).